A 461-amino-acid polypeptide reads, in one-letter code: MSARCCAGQLACCCGSAGCSLCCGCCPKFRQSRTTRFMYLFYFILVIALCCVMMTPSVMKQVKDHIPFFEEFCKKTQAGGDACENLVGYSAVYRVCFGMACFFALFCLLTLKVNNSKSCRAYIHNGFWFFKLLLLGAMCSGAFFIPDQETFLKVWRYVGAGGSFLFICIQLLLIVQFAHKWNKNWTAGTVRNKLWYASLSLVTLIMYSVAVGGLALMAVFYTQWDDCMDNKILLGVHGGLCVLISLVAISPCVQNRQPHSGLLQSGLISCYVTYLTFSALTSKPEKKVLDEHGKNVTICAPDFGQDLHRDENMVTWLGTLLLIVCISYSCLTSTTRSSSDALQSRYGAPELEVARCCFCFGPDGEDTEEQQNVKKGPRVIYDEKKGTVYSYSYFHFVFFLASLYVMMTLTSWFHYENATIKTFFSGWSVFWVKMASCWMCVLLYLQTLVAPLCCPSRQFSV.

At 1 to 36 the chain is on the extracellular side; it reads MSARCCAGQLACCCGSAGCSLCCGCCPKFRQSRTTR. Residues 37–57 traverse the membrane as a helical segment; the sequence is FMYLFYFILVIALCCVMMTPS. The Cytoplasmic segment spans residues 58-90; sequence VMKQVKDHIPFFEEFCKKTQAGGDACENLVGYS. A helical transmembrane segment spans residues 91–111; the sequence is AVYRVCFGMACFFALFCLLTL. Residues 112-125 are Extracellular-facing; sequence KVNNSKSCRAYIHN. N-linked (GlcNAc...) asparagine glycosylation is present at Asn114. A helical membrane pass occupies residues 126–146; the sequence is GFWFFKLLLLGAMCSGAFFIP. The Cytoplasmic segment spans residues 147 to 157; that stretch reads DQETFLKVWRY. The chain crosses the membrane as a helical span at residues 158 to 178; that stretch reads VGAGGSFLFICIQLLLIVQFA. Residues 179-200 are Extracellular-facing; the sequence is HKWNKNWTAGTVRNKLWYASLS. Asn184 is a glycosylation site (N-linked (GlcNAc...) asparagine). A helical transmembrane segment spans residues 201–221; sequence LVTLIMYSVAVGGLALMAVFY. Residues 222 to 231 lie on the Cytoplasmic side of the membrane; that stretch reads TQWDDCMDNK. Residues 232-252 traverse the membrane as a helical segment; that stretch reads ILLGVHGGLCVLISLVAISPC. The Extracellular segment spans residues 253–260; that stretch reads VQNRQPHS. The helical transmembrane segment at 261-281 threads the bilayer; it reads GLLQSGLISCYVTYLTFSALT. Topologically, residues 282–312 are cytoplasmic; that stretch reads SKPEKKVLDEHGKNVTICAPDFGQDLHRDEN. The helical transmembrane segment at 313–333 threads the bilayer; that stretch reads MVTWLGTLLLIVCISYSCLTS. Residues 334 to 392 lie on the Extracellular side of the membrane; the sequence is TTRSSSDALQSRYGAPELEVARCCFCFGPDGEDTEEQQNVKKGPRVIYDEKKGTVYSYS. Residues 393 to 413 form a helical membrane-spanning segment; sequence YFHFVFFLASLYVMMTLTSWF. The Cytoplasmic portion of the chain corresponds to 414–422; sequence HYENATIKT. The chain crosses the membrane as a helical span at residues 423 to 443; it reads FFSGWSVFWVKMASCWMCVLL. Over 444–461 the chain is Extracellular; the sequence is YLQTLVAPLCCPSRQFSV.

Belongs to the TDE1 family.

It localises to the cell membrane. It carries out the reaction a 1,2-diacyl-sn-glycero-3-phospho-L-serine(in) = a 1,2-diacyl-sn-glycero-3-phospho-L-serine(out). It catalyses the reaction a 1,2-diacyl-sn-glycero-3-phosphocholine(in) = a 1,2-diacyl-sn-glycero-3-phosphocholine(out). The enzyme catalyses a 1,2-diacyl-sn-glycero-3-phosphoethanolamine(in) = a 1,2-diacyl-sn-glycero-3-phosphoethanolamine(out). Restriction factor required to restrict infectivity of gammaretroviruses: acts by inhibiting an early step of viral infection. Impairs the penetration of the viral particle into the cytoplasm. Non-ATP-dependent, non-specific lipid transporter for phosphatidylserine, phosphatidylcholine, and phosphatidylethanolamine. Functions as a scramblase that flips lipids in both directions across the membrane. Phospholipid scrambling results in gammaretroviral surface exposure of phosphatidylserine and loss of membrane asymmetry, which leads to loss of infectivity. Enhances the incorporation of serine into phosphatidylserine and sphingolipids. May play a role in providing serine molecules for the formation of myelin glycosphingolipids in oligodendrocytes. This is Serine incorporator 5 (Serinc5) from Mus musculus (Mouse).